Consider the following 545-residue polypeptide: Threonine--tRNA ligase catalytic subunit (545 aa).

The tract at residues 139–433 (DHRLIGEKLD…LLEHFKGKLP (295 aa)) is catalytic. 3 residues coordinate Zn(2+): cysteine 231, histidine 282, and histidine 410.

It belongs to the class-II aminoacyl-tRNA synthetase family. Homodimer. Probably interacts with its editing subunit. Zn(2+) serves as cofactor.

Its subcellular location is the cytoplasm. The catalysed reaction is tRNA(Thr) + L-threonine + ATP = L-threonyl-tRNA(Thr) + AMP + diphosphate + H(+). Functionally, catalyzes the attachment of threonine to tRNA(Thr) in a two-step reaction: L-threonine is first activated by ATP to form Thr-AMP and then transferred to the acceptor end of tRNA(Thr). Also activates L-serine and transfers it to tRNA(Thr) but cannot deacylate incorrectly charged amino acid; unlike most archaea the editing function is found in a freestanding protein. In Saccharolobus islandicus (strain Y.G.57.14 / Yellowstone #1) (Sulfolobus islandicus), this protein is Threonine--tRNA ligase catalytic subunit.